The primary structure comprises 178 residues: ATP synthase subunit delta (178 aa).

This sequence belongs to the ATPase delta chain family. In terms of assembly, F-type ATPases have 2 components, F(1) - the catalytic core - and F(0) - the membrane proton channel. F(1) has five subunits: alpha(3), beta(3), gamma(1), delta(1), epsilon(1). F(0) has three main subunits: a(1), b(2) and c(10-14). The alpha and beta chains form an alternating ring which encloses part of the gamma chain. F(1) is attached to F(0) by a central stalk formed by the gamma and epsilon chains, while a peripheral stalk is formed by the delta and b chains.

The protein localises to the cell membrane. In terms of biological role, f(1)F(0) ATP synthase produces ATP from ADP in the presence of a proton or sodium gradient. F-type ATPases consist of two structural domains, F(1) containing the extramembraneous catalytic core and F(0) containing the membrane proton channel, linked together by a central stalk and a peripheral stalk. During catalysis, ATP synthesis in the catalytic domain of F(1) is coupled via a rotary mechanism of the central stalk subunits to proton translocation. Its function is as follows. This protein is part of the stalk that links CF(0) to CF(1). It either transmits conformational changes from CF(0) to CF(1) or is implicated in proton conduction. This chain is ATP synthase subunit delta, found in Polynucleobacter asymbioticus (strain DSM 18221 / CIP 109841 / QLW-P1DMWA-1) (Polynucleobacter necessarius subsp. asymbioticus).